The primary structure comprises 747 residues: MFNEITKSVTWNGKVLELSTGKIARQADGSVTVKMGNSVLLCTAVVANTAKEGIGFFPLTINYREMAYAVGKIPGGFFKREGKASEREVLVSRLIDRPIRPLFHPAFVNETHVTCTVLSYDPETPVDILAIIGASAALALSPAPYLEIVAASKVGLINGEFVLNPTLELLKTSQLDLVVAGTTESVMMVESEAHLLSEAQMLEAVKFGFESFQPVVKIIKELAEEAKRPKLEMQDLYPSVLKNEIEQLFAKEIEQAFAIKSKQERSTSLDLISEKVITHFISNIENKKYNNYQIESALKSVESDILRKEILEKNKRIDGRSTMDIRQIACEVGLLPSAHGSALFTRGETQSLVSSTLGTSLDEQIVDNLEGEYKERFMLNYIFPPYSVNEAMPMKAPSRREVGHGKLAWRAINPILPNKVQFPYSIRVVAETTESNGSSSMATVCGSSLALMQTGIPIKAPVAGIAMGLVKEGKKFAVLSDILGDEDYFGDMDFKVAGTSEGITALQMDIKISGVDFKIMKVALEQARLGRLHILEQMNKVISKPNSELSKNAPSTTTIKIDKDKIRDIIGPGGKIIKEICETSGAKIDISDDGTVSVYAADRDKLKIASDKIKAIAIEPEIGEIFNGTVTKILDSGAFINYLGNKDGFVHISEISEERIDTVSSVIKQGDIVKVKLIGFDNKGKAKLTIKNADKDKSLNNPKPQNSINNAKENSEHVRCDSIKKRAWNEDNNAETAEFITERKYFN.

Residues Asp-487 and Asp-493 each coordinate Mg(2+). In terms of domain architecture, KH spans 554 to 613 (PSTTTIKIDKDKIRDIIGPGGKIIKEICETSGAKIDISDDGTVSVYAADRDKLKIASDKI). Positions 623 to 691 (GEIFNGTVTK…NKGKAKLTIK (69 aa)) constitute an S1 motif domain. A disordered region spans residues 694-716 (DKDKSLNNPKPQNSINNAKENSE). Polar residues predominate over residues 699–712 (LNNPKPQNSINNAK).

This sequence belongs to the polyribonucleotide nucleotidyltransferase family. It depends on Mg(2+) as a cofactor.

It localises to the cytoplasm. It carries out the reaction RNA(n+1) + phosphate = RNA(n) + a ribonucleoside 5'-diphosphate. Its function is as follows. Involved in mRNA degradation. Catalyzes the phosphorolysis of single-stranded polyribonucleotides processively in the 3'- to 5'-direction. This chain is Polyribonucleotide nucleotidyltransferase, found in Rickettsia canadensis (strain McKiel).